The chain runs to 269 residues: Indole-3-glycerol phosphate synthase (269 aa).

This sequence belongs to the TrpC family.

The catalysed reaction is 1-(2-carboxyphenylamino)-1-deoxy-D-ribulose 5-phosphate + H(+) = (1S,2R)-1-C-(indol-3-yl)glycerol 3-phosphate + CO2 + H2O. It participates in amino-acid biosynthesis; L-tryptophan biosynthesis; L-tryptophan from chorismate: step 4/5. In Roseiflexus castenholzii (strain DSM 13941 / HLO8), this protein is Indole-3-glycerol phosphate synthase.